Consider the following 128-residue polypeptide: RxLR effector protein SFI2 (128 aa).

Residues 1-22 (MRSAFYIFLVVAVLARCSVVAA) form the signal peptide. The RxLR-dEER motif lies at 52–71 (RLLRVAGREDDDATTDEEDR).

This sequence belongs to the RxLR effector family.

The protein localises to the secreted. The protein resides in the host nucleus. Its function is as follows. Effector that suppresses flg22-induced post-translational MAP kinase activation both tomato and Arabidopsis. The perception of highly conserved pathogen- or microbe-associated molecular patterns (PAMPs/MAMPs), such as flg22, triggers converging signaling pathways recruiting MAP kinase cascades and inducing transcriptional re-programming, yielding a generic antimicrobial response. The protein is RxLR effector protein SFI2 of Phytophthora infestans (strain T30-4) (Potato late blight agent).